The chain runs to 360 residues: uncharacterized protein (360 aa).

The tract at residues 1–33 (MSGRRKGCSAATASSSSSSPPSRLPPLPGHARR) is disordered.

Belongs to the herpesviridae US22 family.

This is an uncharacterized protein from Human cytomegalovirus (strain AD169) (HHV-5).